The following is a 243-amino-acid chain: 3-deoxy-manno-octulosonate cytidylyltransferase (243 aa).

It belongs to the KdsB family.

It localises to the cytoplasm. The enzyme catalyses 3-deoxy-alpha-D-manno-oct-2-ulosonate + CTP = CMP-3-deoxy-beta-D-manno-octulosonate + diphosphate. It functions in the pathway nucleotide-sugar biosynthesis; CMP-3-deoxy-D-manno-octulosonate biosynthesis; CMP-3-deoxy-D-manno-octulosonate from 3-deoxy-D-manno-octulosonate and CTP: step 1/1. It participates in bacterial outer membrane biogenesis; lipopolysaccharide biosynthesis. Its function is as follows. Activates KDO (a required 8-carbon sugar) for incorporation into bacterial lipopolysaccharide in Gram-negative bacteria. In Helicobacter pylori (strain HPAG1), this protein is 3-deoxy-manno-octulosonate cytidylyltransferase.